Consider the following 347-residue polypeptide: Ribosomal RNA small subunit methyltransferase C (347 aa).

Belongs to the methyltransferase superfamily. RsmC family. As to quaternary structure, monomer.

Its subcellular location is the cytoplasm. It carries out the reaction guanosine(1207) in 16S rRNA + S-adenosyl-L-methionine = N(2)-methylguanosine(1207) in 16S rRNA + S-adenosyl-L-homocysteine + H(+). Specifically methylates the guanine in position 1207 of 16S rRNA in the 30S particle. This is Ribosomal RNA small subunit methyltransferase C from Serratia proteamaculans (strain 568).